The following is a 175-amino-acid chain: Transcription factor HES-3 (175 aa).

The bHLH domain occupies 1 to 49; the sequence is MEKKRRARINVSLEQLRSLLERHYSHQIRKRKLEKADILELSVKYMRSL. The 34-residue stretch at 65–98 folds into the Orange domain; that stretch reads YPSGFQGGLRGVSQRLRPGEGDSGLRCPLLLQRR. The tract at residues 126–166 is disordered; that stretch reads RAAGGSHSPQSPLPLPGGLLESSTDVVAPHPASNCQAESTR. Positions 129–148 are enriched in low complexity; the sequence is GGSHSPQSPLPLPGGLLESS. The WRPW motif signature appears at 172–175; sequence WRPW.

Transcription repression requires formation of a complex with a corepressor protein of the Groucho/TLE family.

The protein resides in the nucleus. In terms of biological role, transcriptional repressor of genes that require a bHLH protein for their transcription. This chain is Transcription factor HES-3 (Hes3), found in Mus musculus (Mouse).